Here is a 232-residue protein sequence, read N- to C-terminus: Lipopolysaccharide core heptose(II) kinase WaaY (232 aa).

It belongs to the protein kinase superfamily. RfaY/WaaY family.

The enzyme catalyses alpha-D-Glc-(1-&gt;3)-[L-alpha-D-Hep-(1-&gt;7)]-L-alpha-D-Hep-(1-&gt;3)-4-O-PO3(2-)-L-alpha-D-Hep-(1-&gt;5)-[alpha-Kdo-(2-&gt;4)]-alpha-Kdo-(2-&gt;6)-lipid A + ATP = alpha-D-Glc-(1-&gt;3)-[L-alpha-D-Hep-(1-&gt;7)]-4-O-PO3(2-)-L-alpha-D-Hep-(1-&gt;3)-4-O-PO3(2-)-L-alpha-D-Hep-(1-&gt;5)-[alpha-Kdo-(2-&gt;4)]-alpha-Kdo-(2-&gt;6)-lipid A + ADP + H(+). The protein operates within bacterial outer membrane biogenesis; LPS core biosynthesis. In terms of biological role, kinase involved in the biosynthesis of the core oligosaccharide region of lipopolysaccharide (LPS). Catalyzes the phosphorylation of the second heptose unit (HepII) of the inner core. The chain is Lipopolysaccharide core heptose(II) kinase WaaY from Salmonella typhimurium (strain LT2 / SGSC1412 / ATCC 700720).